A 306-amino-acid polypeptide reads, in one-letter code: MASNVTNKTDPRSMNSRVFIGNLNTLVVKKSDVEAIFSKYGKIVGCSVHKGFAFVQYVNERNARAAVAGEDGRMIAGQVLDINLAAEPKVNRGKAGVKRSAAEMYGSVTEHPSPSPLLSSSFDLDYDFQRDYYDRMYSYPARVPPPPPIARAVVPSKRQRVSGNTSRRGKSGFNSKSGQRGSSKSGKLKGDDLQAIKKELTQIKQKVDSLLENLEKIEKEQSKQAVEMKNDKSEEEQSSSSVKKDETNVKMESEGGADDSAEEGDLLDDDDNEDRGDDQLELIKDDEKEAEEGEDDRDSANGEDDS.

Alanine 2 bears the N-acetylalanine mark. Residues lysine 8, lysine 50, lysine 89, and lysine 94 each participate in a glycyl lysine isopeptide (Lys-Gly) (interchain with G-Cter in SUMO2) cross-link. Positions 16–87 constitute an RRM domain; the sequence is SRVFIGNLNT…QVLDINLAAE (72 aa). Serine 107 and valine 108 each carry phosphoserine. A Phosphothreonine modification is found at threonine 109. A phosphoserine mark is found at serine 113, serine 115, and serine 121. 2 disordered regions span residues 139-190 and 221-306; these read YPAR…KLKG and QSKQ…EDDS. The Nuclear localization signal motif lies at 155–161; sequence PSKRQRV. Phosphoserine is present on residues serine 162 and serine 166. Positions 175-185 are enriched in low complexity; sequence SKSGQRGSSKS. Lysine 176 bears the N6-acetyllysine; alternate mark. A Glycyl lysine isopeptide (Lys-Gly) (interchain with G-Cter in SUMO2); alternate cross-link involves residue lysine 176. A coiled-coil region spans residues 190-238; that stretch reads GDDLQAIKKELTQIKQKVDSLLENLEKIEKEQSKQAVEMKNDKSEEEQS. Residues 221 to 232 show a composition bias toward basic and acidic residues; sequence QSKQAVEMKNDK. Residues lysine 223 and lysine 229 each participate in a glycyl lysine isopeptide (Lys-Gly) (interchain with G-Cter in SUMO2) cross-link. Residue lysine 232 forms a Glycyl lysine isopeptide (Lys-Gly) (interchain with G-Cter in SUMO2); alternate linkage. Residue lysine 232 forms a Glycyl lysine isopeptide (Lys-Gly) (interchain with G-Cter in SUMO1); alternate linkage. Residues serine 233, serine 238, serine 239, and serine 241 each carry the phosphoserine modification. A compositionally biased stretch (basic and acidic residues) spans 242–253; it reads VKKDETNVKMES. Glycyl lysine isopeptide (Lys-Gly) (interchain with G-Cter in SUMO2) cross-links involve residues lysine 243 and lysine 244. Residue lysine 250 forms a Glycyl lysine isopeptide (Lys-Gly) (interchain with G-Cter in SUMO2); alternate linkage. Residue lysine 250 forms a Glycyl lysine isopeptide (Lys-Gly) (interchain with G-Cter in SUMO); alternate linkage. Residues serine 253 and serine 260 each carry the phosphoserine modification. A compositionally biased stretch (acidic residues) spans 255 to 276; sequence GGADDSAEEGDLLDDDDNEDRG. Over residues 277–287 the composition is skewed to basic and acidic residues; the sequence is DDQLELIKDDE. Acidic residues predominate over residues 288–306; it reads KEAEEGEDDRDSANGEDDS. Phosphoserine is present on residues serine 299 and serine 306.

The protein belongs to the RRM HNRPC family. RALY subfamily. Tetramer composed of 3 copies of isoform C1 and 1 copy of isoform C2. Assembly of 3 tetramers with bound pre-mRNA gives rise to a 19S complex that interacts with HNRNPA2B1 tetramers. Component of the 40S hnRNP particle. Identified in the spliceosome C complex. Interacts with IGF2BP1. Interacts with DHX9; this interaction is direct, enhanced probably by their concomitant binding to RNA and mediates the attachment to actin filaments. Interacts with PPIA/CYPA. Interacts with YWHAE. In terms of processing, phosphorylated on Ser-260 and Ser-299 in resting cells. Phosphorylated on Ser-253 and on 1 serine residue in the poly-Ser stretch at position 238 in response to hydrogen peroxide. Post-translationally, sumoylated. Sumoylation reduces affinity for mRNA. Ubiquitinated and degraded after nucleo-cytoplasmic transport by YWHAE.

It localises to the nucleus. Functionally, binds pre-mRNA and nucleates the assembly of 40S hnRNP particles. Interacts with poly-U tracts in the 3'-UTR or 5'-UTR of mRNA and modulates the stability and the level of translation of bound mRNA molecules. Single HNRNPC tetramers bind 230-240 nucleotides. Trimers of HNRNPC tetramers bind 700 nucleotides. May play a role in the early steps of spliceosome assembly and pre-mRNA splicing. N6-methyladenosine (m6A) has been shown to alter the local structure in mRNAs and long non-coding RNAs (lncRNAs) via a mechanism named 'm(6)A-switch', facilitating binding of HNRNPC, leading to regulation of mRNA splicing. The polypeptide is Heterogeneous nuclear ribonucleoproteins C1/C2 (HNRNPC) (Homo sapiens (Human)).